Consider the following 441-residue polypeptide: Asparagine--tRNA ligase, mitochondrial (441 aa).

The protein belongs to the class-II aminoacyl-tRNA synthetase family.

The protein localises to the mitochondrion. The enzyme catalyses tRNA(Asn) + L-asparagine + ATP = L-asparaginyl-tRNA(Asn) + AMP + diphosphate + H(+). This Schizosaccharomyces pombe (strain 972 / ATCC 24843) (Fission yeast) protein is Asparagine--tRNA ligase, mitochondrial (slm5).